The primary structure comprises 251 residues: Imidazole glycerol phosphate synthase subunit HisF (251 aa).

Residues Asp10 and Asp129 contribute to the active site.

The protein belongs to the HisA/HisF family. In terms of assembly, heterodimer of HisH and HisF.

The protein localises to the cytoplasm. The enzyme catalyses 5-[(5-phospho-1-deoxy-D-ribulos-1-ylimino)methylamino]-1-(5-phospho-beta-D-ribosyl)imidazole-4-carboxamide + L-glutamine = D-erythro-1-(imidazol-4-yl)glycerol 3-phosphate + 5-amino-1-(5-phospho-beta-D-ribosyl)imidazole-4-carboxamide + L-glutamate + H(+). It participates in amino-acid biosynthesis; L-histidine biosynthesis; L-histidine from 5-phospho-alpha-D-ribose 1-diphosphate: step 5/9. Its function is as follows. IGPS catalyzes the conversion of PRFAR and glutamine to IGP, AICAR and glutamate. The HisF subunit catalyzes the cyclization activity that produces IGP and AICAR from PRFAR using the ammonia provided by the HisH subunit. In Cutibacterium acnes (strain DSM 16379 / KPA171202) (Propionibacterium acnes), this protein is Imidazole glycerol phosphate synthase subunit HisF.